Here is a 361-residue protein sequence, read N- to C-terminus: Phospho-N-acetylmuramoyl-pentapeptide-transferase (361 aa).

A run of 10 helical transmembrane segments spans residues 21-41 (YITLRAVLATLTALTISFLVG), 73-93 (TMGGALILIAIVISTLLWADL), 97-117 (FVWVVLITTLGFGVIGWVDDW), 134-154 (YFWQSLIGAGVAAYLFHTATV), 168-188 (LVLPLGAVSFIVLTYFVIVGT), 200-220 (GLAIMPTVMVASALAVFAYVA), 237-257 (AGELTVFCAAIGGAGLGFLWF), 264-284 (VFMGDVGALALGAALGTVAVI), 289-309 (IVLFIMGGVFVMETISVMLQV), and 338-358 (QVVVRFWIITMMLVLVGLSTL).

This sequence belongs to the glycosyltransferase 4 family. MraY subfamily. Mg(2+) serves as cofactor.

The protein resides in the cell inner membrane. The enzyme catalyses UDP-N-acetyl-alpha-D-muramoyl-L-alanyl-gamma-D-glutamyl-meso-2,6-diaminopimeloyl-D-alanyl-D-alanine + di-trans,octa-cis-undecaprenyl phosphate = di-trans,octa-cis-undecaprenyl diphospho-N-acetyl-alpha-D-muramoyl-L-alanyl-D-glutamyl-meso-2,6-diaminopimeloyl-D-alanyl-D-alanine + UMP. The protein operates within cell wall biogenesis; peptidoglycan biosynthesis. Catalyzes the initial step of the lipid cycle reactions in the biosynthesis of the cell wall peptidoglycan: transfers peptidoglycan precursor phospho-MurNAc-pentapeptide from UDP-MurNAc-pentapeptide onto the lipid carrier undecaprenyl phosphate, yielding undecaprenyl-pyrophosphoryl-MurNAc-pentapeptide, known as lipid I. The polypeptide is Phospho-N-acetylmuramoyl-pentapeptide-transferase (Methylobacillus flagellatus (strain ATCC 51484 / DSM 6875 / VKM B-1610 / KT)).